We begin with the raw amino-acid sequence, 1353 residues long: Xanthine dehydrogenase (1353 aa).

The 2Fe-2S ferredoxin-type domain occupies 17–104 (STLIFFVNGK…GSAVTTVEGI (88 aa)). C56, C61, C64, C86, C126, C129, C161, and C163 together coordinate [2Fe-2S] cluster. The 190-residue stretch at 245–434 (YKGERATWYR…VGLYFPKTLE (190 aa)) folds into the FAD-binding PCMH-type domain. FAD-binding positions include 273 to 280 (LVVGNTEI), F353, 363 to 367 (SLGGN), D376, L424, and K442. The Mo-molybdopterin site is built by Q790 and F821. Substrate contacts are provided by E825 and R903. Mo-molybdopterin is bound at residue R935. F937 serves as a coordination point for substrate. Residue A1102 participates in Mo-molybdopterin binding. E1285 functions as the Proton acceptor in the catalytic mechanism.

Belongs to the xanthine dehydrogenase family. In terms of assembly, homodimer. Requires FAD as cofactor. Mo-molybdopterin is required as a cofactor. The cofactor is [2Fe-2S] cluster.

It localises to the peroxisome. The enzyme catalyses xanthine + NAD(+) + H2O = urate + NADH + H(+). The catalysed reaction is hypoxanthine + NAD(+) + H2O = xanthine + NADH + H(+). Its function is as follows. Key enzyme in purine degradation. Catalyzes the oxidation of hypoxanthine to xanthine. Catalyzes the oxidation of xanthine to uric acid. The chain is Xanthine dehydrogenase (XDH) from Calliphora vicina (Blue blowfly).